The primary structure comprises 669 residues: DNA ligase (669 aa).

NAD(+) is bound at residue 35-39; sequence DFEYD. The segment at 52–71 is disordered; the sequence is YPEWDSPDSPTHRVGSDKTE. A compositionally biased stretch (basic and acidic residues) spans 61 to 71; it reads PTHRVGSDKTE. Residues 84–85 and Glu-115 contribute to the NAD(+) site; that span reads SL. Residue Lys-117 is the N6-AMP-lysine intermediate of the active site. Positions 138, 175, 290, and 314 each coordinate NAD(+). Zn(2+) contacts are provided by Cys-408, Cys-411, Cys-426, and Cys-432. One can recognise a BRCT domain in the interval 590-669; it reads PVSARLAGKT…EEEFLRLIEE (80 aa).

It belongs to the NAD-dependent DNA ligase family. LigA subfamily. Mg(2+) serves as cofactor. It depends on Mn(2+) as a cofactor.

It carries out the reaction NAD(+) + (deoxyribonucleotide)n-3'-hydroxyl + 5'-phospho-(deoxyribonucleotide)m = (deoxyribonucleotide)n+m + AMP + beta-nicotinamide D-nucleotide.. In terms of biological role, DNA ligase that catalyzes the formation of phosphodiester linkages between 5'-phosphoryl and 3'-hydroxyl groups in double-stranded DNA using NAD as a coenzyme and as the energy source for the reaction. It is essential for DNA replication and repair of damaged DNA. This Porphyromonas gingivalis (strain ATCC 33277 / DSM 20709 / CIP 103683 / JCM 12257 / NCTC 11834 / 2561) protein is DNA ligase.